Here is a 331-residue protein sequence, read N- to C-terminus: Tryptophan--tRNA ligase (331 aa).

ATP-binding positions include Gln-10 to Ser-12 and Gly-18 to Asn-19. The 'HIGH' region motif lies at Pro-11 to Asn-19. Residue Asp-133 participates in L-tryptophan binding. Residues Gly-145 to Asp-147, Val-184, and Lys-193 to Ser-197 contribute to the ATP site. A 'KMSKS' region motif is present at residues Lys-193–Ser-197.

This sequence belongs to the class-I aminoacyl-tRNA synthetase family. In terms of assembly, homodimer.

The protein resides in the cytoplasm. The catalysed reaction is tRNA(Trp) + L-tryptophan + ATP = L-tryptophyl-tRNA(Trp) + AMP + diphosphate + H(+). Functionally, catalyzes the attachment of tryptophan to tRNA(Trp). In Listeria monocytogenes serovar 1/2a (strain ATCC BAA-679 / EGD-e), this protein is Tryptophan--tRNA ligase.